A 242-amino-acid polypeptide reads, in one-letter code: Beta-carotene ketolase (242 aa).

The enzyme catalyses all-trans-beta-carotene + 2 AH2 + 2 O2 = echinenone + 2 A + 3 H2O. It carries out the reaction echinenone + 2 AH2 + 2 O2 = canthaxanthin + 2 A + 3 H2O. It functions in the pathway carotenoid biosynthesis; astaxanthin biosynthesis. In terms of biological role, converts beta-carotene to canthaxanthin via echinenone. This chain is Beta-carotene ketolase, found in Paracoccus sp. (strain PC1) (Alcaligenes sp. (strain PC1)).